The sequence spans 380 residues: DNA primase small subunit PriS (380 aa).

Active-site residues include aspartate 101, aspartate 103, and aspartate 282.

The protein belongs to the eukaryotic-type primase small subunit family. In terms of assembly, heterodimer of a small subunit (PriS) and a large subunit (PriL). Requires Mg(2+) as cofactor. Mn(2+) is required as a cofactor.

Catalytic subunit of DNA primase, an RNA polymerase that catalyzes the synthesis of short RNA molecules used as primers for DNA polymerase during DNA replication. The small subunit contains the primase catalytic core and has DNA synthesis activity on its own. Binding to the large subunit stabilizes and modulates the activity, increasing the rate of DNA synthesis while decreasing the length of the DNA fragments, and conferring RNA synthesis capability. The DNA polymerase activity may enable DNA primase to also catalyze primer extension after primer synthesis. May also play a role in DNA repair. The protein is DNA primase small subunit PriS of Hyperthermus butylicus (strain DSM 5456 / JCM 9403 / PLM1-5).